A 130-amino-acid polypeptide reads, in one-letter code: Histone H2A (130 aa).

N6-acetyllysine occurs at positions 4 and 7. Gln105 carries the post-translational modification N5-methylglutamine. Ser127 carries the phosphoserine modification. Positions 127 to 128 (SQ) match the [ST]-Q motif motif.

The protein belongs to the histone H2A family. As to quaternary structure, the nucleosome is a histone octamer containing two molecules each of H2A, H2B, H3 and H4 assembled in one H3-H4 heterotetramer and two H2A-H2B heterodimers. The octamer wraps approximately 147 bp of DNA. In terms of processing, phosphorylated to form H2AS128ph (gamma-H2A) in response to DNA double-strand breaks (DSBs) generated by exogenous genotoxic agents and by stalled replication forks. Phosphorylation is dependent on the DNA damage checkpoint kinases MEC1/ATR and TEL1/ATM, spreads on either side of a detected DSB site and may mark the surrounding chromatin for recruitment of proteins required for DNA damage signaling and repair. Gamma-H2A is removed from the DNA prior to the strand invasion-primer extension step of the repair process and subsequently dephosphorylated by PPH3, a component of the histone H2A phosphatase complex (HTP-C). Dephosphorylation is necessary for efficient recovery from the DNA damage checkpoint. Post-translationally, acetylated by ESA1 to form H2AK4ac and H2AK7ac.

It localises to the nucleus. It is found in the chromosome. Its function is as follows. Core component of nucleosome which plays a central role in DNA double strand break (DSB) repair. Nucleosomes wrap and compact DNA into chromatin, limiting DNA accessibility to the cellular machineries which require DNA as a template. Histones thereby play a central role in transcription regulation, DNA repair, DNA replication and chromosomal stability. DNA accessibility is regulated via a complex set of post-translational modifications of histones, also called histone code, and nucleosome remodeling. This is Histone H2A (HTA1) from Kluyveromyces lactis (strain ATCC 8585 / CBS 2359 / DSM 70799 / NBRC 1267 / NRRL Y-1140 / WM37) (Yeast).